The following is a 297-amino-acid chain: Urease accessory protein UreD (297 aa).

Belongs to the UreD family. UreD, UreF and UreG form a complex that acts as a GTP-hydrolysis-dependent molecular chaperone, activating the urease apoprotein by helping to assemble the nickel containing metallocenter of UreC. The UreE protein probably delivers the nickel.

It is found in the cytoplasm. In terms of biological role, required for maturation of urease via the functional incorporation of the urease nickel metallocenter. The protein is Urease accessory protein UreD of Prochlorococcus marinus subsp. pastoris (strain CCMP1986 / NIES-2087 / MED4).